The primary structure comprises 517 residues: ATP synthase subunit alpha 1 (517 aa).

176-183 (GDRQTGKT) contributes to the ATP binding site.

The protein belongs to the ATPase alpha/beta chains family. As to quaternary structure, F-type ATPases have 2 components, CF(1) - the catalytic core - and CF(0) - the membrane proton channel. CF(1) has five subunits: alpha(3), beta(3), gamma(1), delta(1), epsilon(1). CF(0) has three main subunits: a(1), b(2) and c(9-12). The alpha and beta chains form an alternating ring which encloses part of the gamma chain. CF(1) is attached to CF(0) by a central stalk formed by the gamma and epsilon chains, while a peripheral stalk is formed by the delta and b chains.

It is found in the cell inner membrane. It carries out the reaction ATP + H2O + 4 H(+)(in) = ADP + phosphate + 5 H(+)(out). Functionally, produces ATP from ADP in the presence of a proton gradient across the membrane. The alpha chain is a regulatory subunit. In Shewanella frigidimarina (strain NCIMB 400), this protein is ATP synthase subunit alpha 1.